The sequence spans 428 residues: 4-hydroxy-3-methylbut-2-en-1-yl diphosphate synthase (flavodoxin) (428 aa).

Cys-315, Cys-318, Cys-361, and Glu-368 together coordinate [4Fe-4S] cluster.

The protein belongs to the IspG family. [4Fe-4S] cluster is required as a cofactor.

It carries out the reaction (2E)-4-hydroxy-3-methylbut-2-enyl diphosphate + oxidized [flavodoxin] + H2O + 2 H(+) = 2-C-methyl-D-erythritol 2,4-cyclic diphosphate + reduced [flavodoxin]. The protein operates within isoprenoid biosynthesis; isopentenyl diphosphate biosynthesis via DXP pathway; isopentenyl diphosphate from 1-deoxy-D-xylulose 5-phosphate: step 5/6. Functionally, converts 2C-methyl-D-erythritol 2,4-cyclodiphosphate (ME-2,4cPP) into 1-hydroxy-2-methyl-2-(E)-butenyl 4-diphosphate. The chain is 4-hydroxy-3-methylbut-2-en-1-yl diphosphate synthase (flavodoxin) from Ralstonia pickettii (strain 12J).